Consider the following 236-residue polypeptide: Phycocyanobilin:ferredoxin oxidoreductase (236 aa).

This sequence belongs to the HY2 family.

The enzyme catalyses (2R,3Z)-phycocyanobilin + 4 oxidized [2Fe-2S]-[ferredoxin] = biliverdin IXalpha + 4 reduced [2Fe-2S]-[ferredoxin] + 4 H(+). Catalyzes the four-electron reduction of biliverdin IX-alpha (2-electron reduction at both the A and D rings); the reaction proceeds via an isolatable 2-electron intermediate, 181,182-dihydrobiliverdin. The polypeptide is Phycocyanobilin:ferredoxin oxidoreductase (pcyA) (Thermosynechococcus vestitus (strain NIES-2133 / IAM M-273 / BP-1)).